Reading from the N-terminus, the 357-residue chain is Protein MGF 360-8L (357 aa).

The protein belongs to the asfivirus MGF 360 family.

Functionally, plays a role in virus cell tropism, and may be required for efficient virus replication in macrophages. This chain is Protein MGF 360-8L, found in African swine fever virus (isolate Tick/South Africa/Pretoriuskop Pr4/1996) (ASFV).